A 339-amino-acid polypeptide reads, in one-letter code: Glyceraldehyde-3-phosphate dehydrogenase (339 aa).

Residues 12 to 13 (RI), Asp-39, Arg-84, and Ser-127 contribute to the NAD(+) site. D-glyceraldehyde 3-phosphate-binding positions include 157 to 159 (SCT), Thr-188, Arg-203, 216 to 217 (TG), and Arg-239. Catalysis depends on Cys-158, which acts as the Nucleophile. Asn-320 is a binding site for NAD(+).

It belongs to the glyceraldehyde-3-phosphate dehydrogenase family. In terms of assembly, homotetramer.

It localises to the cytoplasm. It catalyses the reaction D-glyceraldehyde 3-phosphate + phosphate + NAD(+) = (2R)-3-phospho-glyceroyl phosphate + NADH + H(+). Its pathway is carbohydrate degradation; glycolysis; pyruvate from D-glyceraldehyde 3-phosphate: step 1/5. Functionally, catalyzes the oxidative phosphorylation of glyceraldehyde 3-phosphate (G3P) to 1,3-bisphosphoglycerate (BPG) using the cofactor NAD. The first reaction step involves the formation of a hemiacetal intermediate between G3P and a cysteine residue, and this hemiacetal intermediate is then oxidized to a thioester, with concomitant reduction of NAD to NADH. The reduced NADH is then exchanged with the second NAD, and the thioester is attacked by a nucleophilic inorganic phosphate to produce BPG. The polypeptide is Glyceraldehyde-3-phosphate dehydrogenase (gapA) (Mycobacterium leprae (strain TN)).